A 279-amino-acid chain; its full sequence is Universal stress protein MT2087 (279 aa).

The protein belongs to the universal stress protein A family.

The chain is Universal stress protein MT2087 from Mycobacterium tuberculosis (strain CDC 1551 / Oshkosh).